The chain runs to 154 residues: Crossover junction endodeoxyribonuclease RuvC (154 aa).

Residues Asp-7, Glu-67, and Asp-139 contribute to the active site. Mg(2+) is bound by residues Asp-7, Glu-67, and Asp-139.

This sequence belongs to the RuvC family. In terms of assembly, homodimer which binds Holliday junction (HJ) DNA. The HJ becomes 2-fold symmetrical on binding to RuvC with unstacked arms; it has a different conformation from HJ DNA in complex with RuvA. In the full resolvosome a probable DNA-RuvA(4)-RuvB(12)-RuvC(2) complex forms which resolves the HJ. It depends on Mg(2+) as a cofactor.

Its subcellular location is the cytoplasm. The catalysed reaction is Endonucleolytic cleavage at a junction such as a reciprocal single-stranded crossover between two homologous DNA duplexes (Holliday junction).. In terms of biological role, the RuvA-RuvB-RuvC complex processes Holliday junction (HJ) DNA during genetic recombination and DNA repair. Endonuclease that resolves HJ intermediates. Cleaves cruciform DNA by making single-stranded nicks across the HJ at symmetrical positions within the homologous arms, yielding a 5'-phosphate and a 3'-hydroxyl group; requires a central core of homology in the junction. The consensus cleavage sequence is 5'-(A/T)TT(C/G)-3'. Cleavage occurs on the 3'-side of the TT dinucleotide at the point of strand exchange. HJ branch migration catalyzed by RuvA-RuvB allows RuvC to scan DNA until it finds its consensus sequence, where it cleaves and resolves the cruciform DNA. The polypeptide is Crossover junction endodeoxyribonuclease RuvC (Prochlorococcus marinus (strain NATL2A)).